A 358-amino-acid chain; its full sequence is Ion-translocating oxidoreductase complex subunit D (358 aa).

Transmembrane regions (helical) follow at residues 16–36 (VSRT…FGLW), 38–58 (FGWP…VFEV), 68–90 (IRPF…TLPP), 128–148 (AMLV…VGLL), 206–226 (FVPG…GLLL), 236–256 (IPLA…FLAP), and 286–306 (PVTT…VFVI).

This sequence belongs to the NqrB/RnfD family. As to quaternary structure, the complex is composed of six subunits: RnfA, RnfB, RnfC, RnfD, RnfE and RnfG. Requires FMN as cofactor.

It localises to the cellular chromatophore membrane. In terms of biological role, part of a membrane-bound complex that couples electron transfer with translocation of ions across the membrane. Required for nitrogen fixation. Involved in electron transfer to nitrogenase. The sequence is that of Ion-translocating oxidoreductase complex subunit D from Rhodobacter capsulatus (Rhodopseudomonas capsulata).